The following is a 256-amino-acid chain: Calsenilin (256 aa).

The tract at residues 1-20 is disordered; sequence MQPAKEVTKASDGSLLGDLG. Serine 14 carries the post-translational modification Phosphoserine. Residue lysine 26 forms a Glycyl lysine isopeptide (Lys-Gly) (interchain with G-Cter in SUMO1) linkage. Residues cysteine 45 and cysteine 46 are each lipidated (S-palmitoyl cysteine). Serine 60 bears the Phosphoserine mark. Serine 63 carries the phosphoserine; by CK1 modification. Residues 67 to 123 enclose the EF-hand 1; degenerate domain; the sequence is LELSTVRHQPEGLDQLQAQTKFTKKELQSLYRGFKNECPTGLVDEDTFKLIYAQFFP. Lysine 90 participates in a covalent cross-link: Glycyl lysine isopeptide (Lys-Gly) (interchain with G-Cter in SUMO1). 3 EF-hand domains span residues 126 to 161, 162 to 197, and 210 to 245; these read DATTYAHFLFNAFDADGNGAIHFEDFVVGLSILLRG, TVHEKLKWAFNLYDINKDGYITKEEMLAIMKSIYDM, and APAEHVERFFEKMDRNQDGVVTIEEFLEACQKDENI. Ca(2+)-binding residues include aspartate 175, asparagine 177, aspartate 179, tyrosine 181, glutamate 186, aspartate 223, asparagine 225, aspartate 227, and glutamate 234. The interval 243-256 is interaction with KCND2; it reads ENIMSSMQLFENVI.

This sequence belongs to the recoverin family. In terms of assembly, binds to DNA as a homomultimer. Dimerization is induced by binding to calcium. Interacts with the C-terminus of PSEN1 and PSEN2 and with PSEN2 CTF subunit. Associates with KCN1. Component of heteromultimeric potassium channels. Identified in potassium channel complexes containing KCND1, KCND2, KCND3, KCNIP1, KCNIP2, KCNIP3, KCNIP4, DPP6 and DPP10. Interacts with KCND2 and KCND3. Palmitoylated. Palmitoylation enhances association with the plasma membrane. Post-translationally, proteolytically cleaved by caspase-3. In terms of processing, phosphorylation at Ser-63 inhibits cleavage by CASP3. As to expression, highly expressed in brain. Widely expressed at lower levels. Expression levels are elevated in brain cortex regions affected by Alzheimer disease.

Its subcellular location is the cytoplasm. The protein resides in the cell membrane. The protein localises to the endoplasmic reticulum. It is found in the golgi apparatus. It localises to the nucleus. Calcium-dependent transcriptional repressor that binds to the DRE element of genes including PDYN and FOS. Affinity for DNA is reduced upon binding to calcium and enhanced by binding to magnesium. Seems to be involved in nociception. Functionally, regulatory subunit of Kv4/D (Shal)-type voltage-gated rapidly inactivating A-type potassium channels, such as KCND2/Kv4.2 and KCND3/Kv4.3. Modulates channel expression at the cell membrane, gating characteristics, inactivation kinetics and rate of recovery from inactivation in a calcium-dependent and isoform-specific manner. In terms of biological role, may play a role in the regulation of PSEN2 proteolytic processing and apoptosis. Together with PSEN2 involved in modulation of amyloid-beta formation. In Homo sapiens (Human), this protein is Calsenilin (KCNIP3).